An 839-amino-acid polypeptide reads, in one-letter code: Lon protease (839 aa).

One can recognise a Lon N-terminal domain in the interval leucine 31–isoleucine 224. Residue glycine 377–threonine 384 coordinates ATP. The region spanning alanine 613–glutamate 790 is the Lon proteolytic domain. Catalysis depends on residues serine 696 and lysine 739. A disordered region spans residues isoleucine 807–lysine 839. Residues lysine 823 to lysine 832 show a composition bias toward low complexity.

It belongs to the peptidase S16 family. As to quaternary structure, homohexamer. Organized in a ring with a central cavity.

It is found in the cytoplasm. It carries out the reaction Hydrolysis of proteins in presence of ATP.. Functionally, ATP-dependent serine protease that mediates the selective degradation of mutant and abnormal proteins as well as certain short-lived regulatory proteins. Required for cellular homeostasis and for survival from DNA damage and developmental changes induced by stress. Degrades polypeptides processively to yield small peptide fragments that are 5 to 10 amino acids long. Binds to DNA in a double-stranded, site-specific manner. This chain is Lon protease, found in Leptospira interrogans serogroup Icterohaemorrhagiae serovar copenhageni (strain Fiocruz L1-130).